We begin with the raw amino-acid sequence, 379 residues long: GPN-loop GTPase QQT2 (379 aa).

Position 1 is an N-acetylmethionine (methionine 1). 51-56 (GSGKTS) is a GTP binding site. The short motif at 108–110 (GPN) is the Gly-Pro-Asn (GPN)-loop; involved in dimer interface element. Residues 211–214 (NKTD) and alanine 267 contribute to the GTP site. Residues 288–322 (METYKADLDMRKADKERLEEERKKHEMEKLRKDME) adopt a coiled-coil conformation. Basic and acidic residues-rich tracts occupy residues 303 to 322 (ERLE…KDME) and 335 to 346 (LKDRDATEKMML). A disordered region spans residues 303-379 (ERLEEERKKH…EDDETKHYYL (77 aa)). The segment covering 347-372 (EEDDEDFQVEDEEDSDDAIDEDDEDD) has biased composition (acidic residues).

The protein belongs to the GPN-loop GTPase family. Heterodimer with QQT1. Expressed in individual cells of roots, leaves and flowers.

It is found in the cytoplasm. Its subcellular location is the nucleus. It localises to the cytoskeleton. The protein resides in the spindle. The protein localises to the phragmoplast. Small GTPase that is essential for the correct formation of the tangential divisions in early embryos. Associates with microtubule during mitosis and may function in the positioning of the division plane. May participate in the patterning of the early embryo at the octant-dermatogen transition. The sequence is that of GPN-loop GTPase QQT2 from Arabidopsis thaliana (Mouse-ear cress).